A 901-amino-acid chain; its full sequence is MLIPSKLSRPVRLDHTVVRERLLAKLSGANNFRLALITSPAGYGKTTLISQWAAGKNDIGWYSLDEGDNQQERFASYLIAAVQQATNGHCAICETMAQKRQYASLTSLFAQLFIELAEWHSPLYLVIDDYHLITNPVIHESMRFFIRHQPENLTLVVLSRNLPQLGIANLRVRDQLLEIGSQQLAFTHQEAKQFFDCRLSSPIEAAESSWICDDVSGWATALQLIALSARQNTHSAHKSARRLAGINASHLSDYLVDEVLDNVDLATRHFLLKSAILRSMNDALITRVTGEENGQMRLEEIERQGLFLQRMDDTGEWFCYHPLFGNFLRQRCQWELAAELPEIHRAAAESWMAQGFPSEAIHHALAAGDALMLRDILLNHAWSLFNHSELSLLEESLKALPWDSLLENPQLVLLQAWLMQSQHRYGEVNTLLARAEHEIKDIREGTMHAEFNALRAQVAINDGNPDEAERLAKLALEELPPGWFYSRIVATSVLGEVLHCKGELTRSLALMQQTEQMARQHDVWHYALWSLIQQSEILFAQGFLQTAWETQEKTFQLINEQHLEQLPMHEFLVRIRAQLLWAWARLDEAEASARSGIEVLSSYQPQQQLQCLAMLIQCSLARGDLDNARSQLNRLENLLGNGKYHSDWISNANKVRVIYWQMTGDKAAAANWLRHTAKPEFANNHFLQGQWRNIARAQILLGEFEPAEIVLEELNENARSLRLMSDLNRNLLLLNQLYWQAGRKSDAQRVLLDALKLANRTGFISHFVIEGEAMAQQLRQLIQLNTLPELEQHRAQRILREINQHHRHKFAHFDENFVERLLNHPEVPELIHTSPLTQREWQVLGLIYSGYSNEQIAGELEVAATTIKTHIRNLYQKLGVAHRQAAVQHAQKLLKMMGYGV.

Position 39–46 (39–46) interacts with ATP; it reads SPAGYGKT. One can recognise an HTH luxR-type domain in the interval 829–894; that stretch reads ELIHTSPLTQ…AAVQHAQKLL (66 aa). A DNA-binding region (H-T-H motif) is located at residues 853–872; it reads NEQIAGELEVAATTIKTHIR.

Belongs to the MalT family. Monomer in solution. Oligomerizes to an active state in the presence of the positive effectors ATP and maltotriose.

With respect to regulation, activated by ATP and maltotriose, which are both required for DNA binding. Positively regulates the transcription of the maltose regulon whose gene products are responsible for uptake and catabolism of malto-oligosaccharides. Specifically binds to the promoter region of its target genes, recognizing a short DNA motif called the MalT box. This Shigella sonnei (strain Ss046) protein is HTH-type transcriptional regulator MalT.